Reading from the N-terminus, the 149-residue chain is L-alanine exporter AlaE (149 aa).

4 helical membrane passes run 16–36 (FAMV…LSGM), 46–66 (LVAI…RDLI), 85–105 (VLAY…TVGA), and 112–132 (AAVS…GYFL).

The protein belongs to the AlaE exporter family.

It localises to the cell inner membrane. Exports L-alanine. The protein is L-alanine exporter AlaE of Salmonella arizonae (strain ATCC BAA-731 / CDC346-86 / RSK2980).